Reading from the N-terminus, the 650-residue chain is Probable protein phosphatase 2C 36 (650 aa).

Positions 146–166 (SGKKTKEKAKLKKSGSKSFTK) are disordered. Over residues 148–166 (KKTKEKAKLKKSGSKSFTK) the composition is skewed to basic residues. In terms of domain architecture, PPM-type phosphatase spans 239 to 641 (ESALEEPKIQ…DDVSVIVISL (403 aa)). Residues D276, G277, D569, and D632 each contribute to the Mn(2+) site.

Belongs to the PP2C family. Mg(2+) is required as a cofactor. The cofactor is Mn(2+).

It localises to the nucleus. It carries out the reaction O-phospho-L-seryl-[protein] + H2O = L-seryl-[protein] + phosphate. It catalyses the reaction O-phospho-L-threonyl-[protein] + H2O = L-threonyl-[protein] + phosphate. In Arabidopsis thaliana (Mouse-ear cress), this protein is Probable protein phosphatase 2C 36 (PLL3).